Reading from the N-terminus, the 23-residue chain is uncharacterized protein (23 aa).

A helical membrane pass occupies residues 3 to 23 (YFFMGISFMVIVWAGTFALMI).

It localises to the cell inner membrane. This is an uncharacterized protein from Escherichia coli (strain K12).